Here is a 766-residue protein sequence, read N- to C-terminus: Protein sak1 (766 aa).

Residues 101–176 (GICWLKRACE…YHYCGIKLRG (76 aa)) constitute a DNA-binding region (RFX-type winged-helix). Phosphoserine is present on residues Ser223, Ser224, and Ser227. Disordered regions lie at residues 271–308 (PQAH…QPTY) and 708–731 (LQEH…QQQQ). Over residues 279 to 289 (HLSQSNVPPQL) the composition is skewed to polar residues. 2 stretches are compositionally biased toward low complexity: residues 290-308 (SHSS…QPTY) and 715-731 (QQHF…QQQQ).

The protein belongs to the RFX family.

It localises to the nucleus. In terms of biological role, positively regulates cyclic AMP-dependent protein kinase-mediated exit from the mitotic cell cycle. This is Protein sak1 (sak1) from Schizosaccharomyces pombe (strain 972 / ATCC 24843) (Fission yeast).